The chain runs to 314 residues: Fibrinogen-like protein 1 (314 aa).

The N-terminal stretch at 1–22 is a signal peptide; that stretch reads MGEIRSFVLITVALILGKESWV. The stretch at 28–62 forms a coiled coil; sequence CLQEQVRLRAQVRQLETRVKQQQVVIAQLLHEKEV. Residues 76–308 form the Fibrinogen C-terminal domain; that stretch reads LGGKRHYADC…SVVMKIRPSD (233 aa). Intrachain disulfides connect C85–C114 and C250–C263.

As to quaternary structure, homodimer. Interacts (via the Fibrinogen C-terminal domain) with LAG3 (via Ig-like domains 1 and 2).

The protein localises to the secreted. In terms of biological role, immune suppressive molecule that inhibits antigen-specific T-cell activation by acting as a major ligand of LAG3. Responsible for LAG3 T-cell inhibitory function. Binds LAG3 independently from MHC class II (MHC-II). Secreted by, and promotes growth of, hepatocytes. This is Fibrinogen-like protein 1 from Rattus norvegicus (Rat).